The primary structure comprises 226 residues: Choline transport system permease protein OpuBD (226 aa).

The region spanning 22-202 (FGRHFLMSAY…VMAVGADLLM (181 aa)) is the ABC transmembrane type-1 domain. 5 consecutive transmembrane segments (helical) span residues 27–47 (LMSA…GILI), 52–72 (RLSA…ALAM), 73–93 (LAVL…SLFL), 148–168 (ALVI…GGLG), and 182–202 (AIIL…DLLM).

This sequence belongs to the binding-protein-dependent transport system permease family. CysTW subfamily.

Its subcellular location is the cell membrane. Involved in a high affinity multicomponent binding-protein-dependent transport system for choline; probably responsible for the translocation of the substrate across the membrane. This chain is Choline transport system permease protein OpuBD (opuBD), found in Bacillus subtilis (strain 168).